Consider the following 348-residue polypeptide: Eukaryotic translation initiation factor 3 subunit I (348 aa).

WD repeat units lie at residues 8–49 (GHER…GTFE), 51–91 (HMGT…YTYE), 93–135 (PTPV…PKNQ), 147–186 (DGAK…FIDS), 196–238 (EKIH…KVYK), and 294–333 (GHFG…YDFE).

It belongs to the eIF-3 subunit I family. In terms of assembly, component of the eukaryotic translation initiation factor 3 (eIF-3) complex.

It is found in the cytoplasm. Its function is as follows. Component of the eukaryotic translation initiation factor 3 (eIF-3) complex, which is involved in protein synthesis of a specialized repertoire of mRNAs and, together with other initiation factors, stimulates binding of mRNA and methionyl-tRNAi to the 40S ribosome. The eIF-3 complex specifically targets and initiates translation of a subset of mRNAs involved in cell proliferation. The chain is Eukaryotic translation initiation factor 3 subunit I from Meyerozyma guilliermondii (strain ATCC 6260 / CBS 566 / DSM 6381 / JCM 1539 / NBRC 10279 / NRRL Y-324) (Yeast).